The sequence spans 438 residues: Carboxypeptidase A6 (438 aa).

The first 30 residues, Met1–Cys30, serve as a signal peptide directing secretion. Positions His31–Arg129 are cleaved as a propeptide — activation peptide. Residues Asn89 and Asn153 are each glycosylated (N-linked (GlcNAc...) asparagine). Positions Val138–Leu433 constitute a Peptidase M14 domain. Zn(2+) is bound by residues His197 and Glu200. Residues His197–Glu200, Arg255, and Asn272–Arg273 contribute to the substrate site. Cys266 and Cys289 are oxidised to a cystine. His325 is a Zn(2+) binding site. Ala326–Tyr327 lines the substrate pocket. An N-linked (GlcNAc...) asparagine glycan is attached at Asn344. Tyr377 contacts substrate. The active-site Proton donor/acceptor is the Glu399. Asn428 carries an N-linked (GlcNAc...) asparagine glycan.

The protein belongs to the peptidase M14 family. Requires Zn(2+) as cofactor. As to expression, in brain, highly expressed in the olfactory bulb with lower levels in other regions including cerebral cortex, hippocampus, hypothalamus, striatum and medulla. Within the olfactory bulb, highest levels occur in the mitral and granular layers with lower levels in the internal and external plexiform layers. Moderate levels are found in the epididymis with low levels in colon and spleen. Not detected in adrenal, liver, lung, ovary or testis. At embryonic day 14.5, enriched in eye, ear, osteoblasts, stomach, skin, dorsal root ganglia and throughout the CNS.

It is found in the secreted. Its subcellular location is the extracellular space. The protein resides in the extracellular matrix. May be involved in the proteolytic inactivation of enkephalins and neurotensin in some brain areas. May convert inactive angiotensin I into the biologically active angiotensin II. Releases a C-terminal amino acid, with preference for large hydrophobic C-terminal amino acids and shows only very weak activity toward small amino acids and histidine. The polypeptide is Carboxypeptidase A6 (Cpa6) (Mus musculus (Mouse)).